Here is a 384-residue protein sequence, read N- to C-terminus: MSSTAGQVINCKAAVAWSAKAPLSIETIQVAPPKAHEVRVKILYTAVCHTDAYTLDGHDPEGLFPVVLGHEGSGIVESVGEGVTGFAPGDHVVPLYVPQCKECEYCKNPKTNLCQKIRISQGNGFMPDGSSRFTCNGKQLFHFMGCSTFSEYTVVADISLCKVNPEAPLEKVSLLGCGISTGYGAVLNTCKVEEGSTVAVWGLGAVGLAVIMGAKAAGAKKIVGIDLIESKFESAKFFGATECINPKSVELPEGKSFQAWLVEQFDGGFDYTFECIGNVHTMRQALEAAHKGWGVSCIIGVAGAGQEIATRPFQLVTGRTWKGTAFGGWKSVESVPRLVDDYMNKKLLIDEFITHRWNIDDINTAFDVLHKGESLRSVLAFEKI.

Cysteine 48, histidine 70, cysteine 100, cysteine 103, cysteine 106, cysteine 114, and cysteine 177 together coordinate Zn(2+).

It belongs to the zinc-containing alcohol dehydrogenase family. Class-III subfamily. Homodimer. Requires Zn(2+) as cofactor.

The protein resides in the cytoplasm. It carries out the reaction a primary alcohol + NAD(+) = an aldehyde + NADH + H(+). The catalysed reaction is a secondary alcohol + NAD(+) = a ketone + NADH + H(+). The enzyme catalyses S-(hydroxymethyl)glutathione + NADP(+) = S-formylglutathione + NADPH + H(+). It catalyses the reaction S-(hydroxymethyl)glutathione + NAD(+) = S-formylglutathione + NADH + H(+). Class-III ADH is remarkably ineffective in oxidizing ethanol, but it readily catalyzes the oxidation of long-chain primary alcohols and the oxidation of S-(hydroxymethyl) glutathione. Plays a role in the calcium flux to the cytoplasm in the ASJ sensory neurons upon removal of a nitric oxide stimulus. The protein is Alcohol dehydrogenase class-3 of Caenorhabditis elegans.